A 431-amino-acid chain; its full sequence is Adenylosuccinate synthetase (431 aa).

Residues 12-18 (GDEGKGK) and 40-42 (GHT) each bind GTP. D13 (proton acceptor) is an active-site residue. Mg(2+) contacts are provided by D13 and G40. IMP-binding positions include 13–16 (DEGK), 38–41 (NAGH), T129, R143, Q224, and T239. The active-site Proton donor is the H41. An Isoglutamyl lysine isopeptide (Lys-Gln) (interchain with Q-Cter in protein Pup) cross-link involves residue K292. 299–305 (VTTGRAR) serves as a coordination point for substrate. Residue R303 participates in IMP binding. Residues R305, 331 to 333 (KLD), and 413 to 415 (GVG) each bind GTP.

Belongs to the adenylosuccinate synthetase family. In terms of assembly, homodimer. Requires Mg(2+) as cofactor.

The protein resides in the cytoplasm. It carries out the reaction IMP + L-aspartate + GTP = N(6)-(1,2-dicarboxyethyl)-AMP + GDP + phosphate + 2 H(+). The protein operates within purine metabolism; AMP biosynthesis via de novo pathway; AMP from IMP: step 1/2. Functionally, plays an important role in the de novo pathway of purine nucleotide biosynthesis. Catalyzes the first committed step in the biosynthesis of AMP from IMP. This is Adenylosuccinate synthetase from Mycolicibacterium smegmatis (strain ATCC 700084 / mc(2)155) (Mycobacterium smegmatis).